The sequence spans 255 residues: Small ribosomal subunit protein eS4 (255 aa).

The 73-residue stretch at 43 to 115 (IPLLILVRDV…PTRFFTLHPI (73 aa)) folds into the S4 RNA-binding domain.

The protein belongs to the eukaryotic ribosomal protein eS4 family.

The polypeptide is Small ribosomal subunit protein eS4 (Hyperthermus butylicus (strain DSM 5456 / JCM 9403 / PLM1-5)).